A 179-amino-acid polypeptide reads, in one-letter code: Large ribosomal subunit protein uL6 (179 aa).

Belongs to the universal ribosomal protein uL6 family. Part of the 50S ribosomal subunit.

This protein binds to the 23S rRNA, and is important in its secondary structure. It is located near the subunit interface in the base of the L7/L12 stalk, and near the tRNA binding site of the peptidyltransferase center. The chain is Large ribosomal subunit protein uL6 from Bacillus velezensis (strain DSM 23117 / BGSC 10A6 / LMG 26770 / FZB42) (Bacillus amyloliquefaciens subsp. plantarum).